The sequence spans 1531 residues: MDVSQFAESKGVKTALEAAALAAANTALRNARVVTPYLTQQQTKNLLELFRGAQLRFEPRDNWAHPVQRVVHDALEQYVRRAAGPNCLEVGAHPRSINRHQASHRCFLPPVGRDEQRWQVAPRRGLCNLIRRALLNGVKVAREFCQLGFGACSHQCEVGIALYSLHDMRPADVACAMARHNMRTMYVVLHLPEEAMLPPGSYSNKFYNTVNTADKCIITYADDSCAGYVHKREVLQDWITTTGVSGRHPMLIERVRAIGCHFVLLCTATQPCPMPYTPYPSSNTVYVRNVYGPALGAGLFTPKCCVDATFYPVPRRVWQRLMMFGTTLDDDAFCCSRLLTYLRGISTKVTVGNIVANEGWQPEEQQLTAVAIAAYLTVCHQRWVRTQGIARGVRRLQAEHAQQFWFKVWELFTNTGTVPGYSAGFYRQLATWISGGLTIDFERRVFDKRVKCGCCCVCERRPADPGCLCIDDFPDGANGLVKLKKWPIRAGTKSAVSKWAQVRVRADSTEDLIDLSVPKLLTLKELAAAAIRKQPSAPPSLHILDRRPVGDPRRPVNCAPPAVSAGPVPAPPGNPVIESVQGSGAGGPEVSESQPGLTPTREVTNMPLPPQRGQEEVLAVLPSGARVIVGNLLDVAADWLVNPANRDHQPGGGLCGMFHRRWPHLWPVCGEVQDLPTGPVIFQQGPPKVIHAPGPDYRIKPDPDGLRRVYAVVHQAHGTVASPLISAGIYRAPARESFEAWAATARDGDLLVVQRSMAQHIRDFVLNEGRHRPRELHVDRAMADMVNYGLATEPEPYNELVKGVEVAPMTVKYALIAGVPGSGKSSSVDHRGAVVITPTKTLAREWSARGATAVTPHVAASAAPEGRVIVDEAYAIPPHLLVASLRRARDVVMLGDPHQIPALDFDGRCLTSAVDLGLQPTSWRTVSHRCPWDVCIFLRTDYPTITTTSRVLRSVVFTGETIGQKIVFTQVAKQSNPGSITVHEAQGSTFDQTTIIATLDARGLIASSRAHAIVALTRHRERCSVIDVGGVLVEIGVTDAMFNNIEMQLVRPDAAAPAGVLRAPDDTVDGLLDIPPAHTDVAAVLTAEAIGHAPLELAAINPPGPVLEQGLLYMPARLDGRDEVVKLQLSDTVHCRLAAPTSRLAVINTLVGRYGKATKLPEVEYDLMDTIAQFWHHIGPINPSTLEYAEMCEAMLSKGQDGSLIVHLDLQDADCSRITFFQKDCAKFTLDDPVAHGKVGQGISAWPKTLCALFGPWFRAIEKHLVAGLPPGYYYGDLYTEADLHRSVLCAPAGHLVFENDFSEFDSTQNNVSLDLECELMRRFGMPDWMVALYHLVRSYWLLVAPKEALRGCWKKHSGEPGTLLWNTVWNMTVLHHVYEFDRPSVLCFKGDDSVVVCESVRARPEGVSLVADCGLKMKDKTGPCGAFSNLLIFPGAGVVCDLLRQWGRLTDKNWGPDIQRMQDLEQACKDFVARVVTQGKEMLTIQLVAGYYGVEVGMVEVVWGALKACAAARETLVTNRLPVLNLSKED.

The Alphavirus-like MT domain maps to 56 to 239 (RFEPRDNWAH…HKREVLQDWI (184 aa)). The segment at 60–239 (RDNWAHPVQR…HKREVLQDWI (180 aa)) is methyltransferase. Residues 240-434 (TTTGVSGRHP…FYRQLATWIS (195 aa)) are Y-domain. The tract at residues 435 to 621 (GGLTIDFERR…RGQEEVLAVL (187 aa)) is putative protease. Residues 561–600 (PAVSAGPVPAPPGNPVIESVQGSGAGGPEVSESQPGLTPT) are disordered. Over residues 591–600 (SESQPGLTPT) the composition is skewed to polar residues. The 150-residue stretch at 612–761 (RGQEEVLAVL…VVQRSMAQHI (150 aa)) folds into the Macro domain. Residues 622 to 786 (PSGARVIVGN…HVDRAMADMV (165 aa)) are X-domain. One can recognise a (+)RNA virus helicase ATP-binding domain in the interval 786-924 (VNYGLATEPE…DLGLQPTSWR (139 aa)). Residues 803–1046 (GVEVAPMTVK…VTDAMFNNIE (244 aa)) form an NTPase/helicase region. Position 818–825 (818–825 (GVPGSGKS)) interacts with ATP. The (+)RNA virus helicase C-terminal domain occupies 925–1058 (TVSHRCPWDV…LVRPDAAAPA (134 aa)). The segment at 1049-1531 (LVRPDAAAPA…LPVLNLSKED (483 aa)) is RNA-directed RNA polymerase. The region spanning 1295 to 1406 (HLVFENDFSE…VCESVRARPE (112 aa)) is the RdRp catalytic domain.

This sequence belongs to the hepevirus non-structural polyprotein family. As to quaternary structure, the protease domain interacts with host EIF2AK4 (via C-terminus); this interaction inhibits dimerization of EIF2AK4 and prevents EIF2AK4-mediated phosphorylation of host EIF2A. Mg(2+) serves as cofactor. ORF1 polyprotein does not seem to be processed into distinct enzymatic domains by a viral protease belonging to ORF1, but could be processed by a host serine protease like thrombin.

The protein resides in the host cytoplasm. Its subcellular location is the host perinuclear region. It carries out the reaction RNA(n) + a ribonucleoside 5'-triphosphate = RNA(n+1) + diphosphate. It catalyses the reaction GTP + S-adenosyl-L-methionine = N(7)-methyl-GTP + S-adenosyl-L-homocysteine. Functionally, methyltransferase: Displays a capping enzyme activity. This function is necessary since all viral RNAs are synthesized in the cytoplasm, and host capping enzymes are restricted to the nucleus. The enzymatic reaction involves a covalent link between 7-methyl-GMP and the methyltransferase, whereas eukaryotic capping enzymes form a covalent complex only with GMP. Methyltransferase catalyzes transfer of a methyl group from S-adenosylmethionine to GTP and GDP to yield m(7)GTP or m(7)GDP. This enzyme also displays guanylyltransferase activity to form a covalent complex, methyltransferase-m(7)GMP, from which 7-methyl-GMP is transferred to the mRNA to create the cap structure. Its function is as follows. Y-domain: Indispensable for virus replication. In terms of biological role, putative protease: The putative protease domain although necessary for replication of the virus may not be a protease but rather a structural Zn(2+)-binding domain. Inhibits induction of IFN-beta by MDA5 and RIG-I pathways and down-regulates the expression of MDA5. NTPase/helicase: Multi-functional protein that exhibits NTPase and RNA unwinding activities. Hydrolyzes all NTPs efficiently and unwinds RNA duplexes containing 5' overhangs. Possesses a sequence independent RNA-5'-triphosphatase (RTPase) activity suggestive of its role in forming viral cap structure. Also participates in viral genome replication, RNA translocation and genome packaging/unpackaging. Functionally, RNA-directed RNA polymerase: Plays an essential role in the virus replication. Binds to the 3'-end of the genomic RNA to initiate viral replication. This chain is Non-structural polyprotein pORF1, found in Gallus gallus (Chicken).